Here is an 849-residue protein sequence, read N- to C-terminus: MAP7 domain-containing protein 1 (849 aa).

Disordered stretches follow at residues 1-151 (MESG…REER) and 186-210 (EQRLKAEQRRAALEERQRQKLEKNK). Residues 24–41 (EPRPSPEGDPSPPPPPTP) are compositionally biased toward pro residues. Threonine 49 and threonine 53 each carry phosphothreonine. Phosphoserine is present on residues serine 72 and serine 95. Phosphothreonine is present on threonine 99. Serine 115 and serine 118 each carry phosphoserine. Residue threonine 120 is modified to Phosphothreonine. Serine 125 and serine 127 each carry phosphoserine. The span at 132–151 (QDVKKAGERHKLAKERREER) shows a compositional bias: basic and acidic residues. The stretch at 167–223 (EKAKALREKQLQERRRRLEEQRLKAEQRRAALEERQRQKLEKNKERYEAAIQRSVKK) forms a coiled coil. Phosphoserine is present on residues serine 256, serine 275, serine 315, serine 368, and serine 401. The interval 318-815 (TLPRNGRDQG…GFPAKGTAGD (498 aa)) is disordered. Residues 407–437 (RRLEATPVQKKEKKDKERENEKEKSALARER) are compositionally biased toward basic and acidic residues. Residues serine 444, serine 448, serine 454, and serine 460 each carry the phosphoserine modification. The segment covering 457–474 (AELSTKSKARPTSPSTTW) has biased composition (polar residues). Residue lysine 462 forms a Glycyl lysine isopeptide (Lys-Gly) (interchain with G-Cter in SUMO2) linkage. A phosphoserine mark is found at serine 479 and serine 496. Residues 479-497 (SPCPSPGPGHTLPPKPPSP) show a composition bias toward pro residues. Residues 523–539 (PEDKNHSKSRTAEEKEP) show a composition bias toward basic and acidic residues. The segment covering 542–556 (PASPAPSPVPSPTPA) has biased composition (pro residues). Phosphoserine is present on residues serine 544, serine 548, and serine 552. Threonine 554 is subject to Phosphothreonine. A compositionally biased stretch (low complexity) spans 568–582 (PPDTAVPAVPTVPTF). Residues 602-724 (TTDREEATRL…QERRKRLEEI (123 aa)) adopt a coiled-coil conformation. A compositionally biased stretch (basic and acidic residues) spans 603–743 (TDREEATRLL…AETKKQDGKE (141 aa)).

The protein belongs to the MAP7 family.

The protein localises to the cytoplasm. Its subcellular location is the cytoskeleton. It localises to the spindle. The protein resides in the microtubule organizing center. It is found in the centrosome. The protein localises to the midbody. In terms of biological role, microtubule-stabilizing protein involved in the control of cell motility and neurite outgrowth. Facilitate microtubule stabilization through the maintenance of acetylated stable microtubules. The sequence is that of MAP7 domain-containing protein 1 (Map7d1) from Rattus norvegicus (Rat).